We begin with the raw amino-acid sequence, 655 residues long: Broad substrate specificity ATP-binding cassette transporter ABCG2 (655 aa).

The Cytoplasmic segment spans residues 1–395 (MSSNSYEVSI…KNLLGNPQAS (395 aa)). In terms of domain architecture, ABC transporter spans 36 to 285 (LSFHNICYRV…FGAIGFRCEP (250 aa)). ATP-binding positions include 79–86 (GPTGGGKS), 183–189 (RGVSGGE), Glu210, and His242. The 263-residue stretch at 389-651 (LGNPQASIAQ…TIAYLKLLFL (263 aa)) folds into the ABC transmembrane type-2 domain. Residues 396-416 (IAQLIVTVFLGLVIGAIFYDL) traverse the membrane as a helical segment. At 417 to 428 (KNDPAGIQNRAG) the chain is on the extracellular side. A helical transmembrane segment spans residues 429-449 (VLFFLTTNQCFSSVSAVELLV). Over 450–477 (VEKKLFIHEYISGYYRVSSYFFGKLLSD) the chain is Cytoplasmic. The chain crosses the membrane as a helical span at residues 478-498 (LLPMRMLPSIIFTCITYFLLG). Residues 499–506 (LKPKVEAF) are Extracellular-facing. The chain crosses the membrane as a helical span at residues 507 to 527 (FIMMLTLMMVAYSASSMALAI). Residues 528–535 (AAGQSVVS) lie on the Cytoplasmic side of the membrane. A helical membrane pass occupies residues 536–556 (IATLLMTISFVFMMIFSGLLV). Topologically, residues 557-630 (NLKTVVPWLS…ISPWGLWKNH (74 aa)) are extracellular. The cysteines at positions 592 and 608 are disulfide-linked. Asn596 and Asn600 each carry an N-linked (GlcNAc...) asparagine glycan. A helical transmembrane segment spans residues 631–651 (VALACMIVIFLTIAYLKLLFL). The Cytoplasmic portion of the chain corresponds to 652 to 655 (KKFS).

The protein belongs to the ABC transporter superfamily. ABCG family. Eye pigment precursor importer (TC 3.A.1.204) subfamily. In terms of assembly, homodimer; disulfide-linked. The minimal functional unit is a homodimer, but the major oligomeric form in plasma membrane is a homotetramer with possibility of higher order oligomerization up to homododecamers. Post-translationally, N-glycosylated. Glycosylation-deficient ABCG2 is normally expressed and functional. In terms of processing, phosphorylated. Phosphorylation may regulate the localization to the plasma membrane, the homooligomerization and therefore, the activity of the transporter.

The protein resides in the cell membrane. It localises to the apical cell membrane. Its subcellular location is the mitochondrion membrane. The catalysed reaction is ATP + H2O + xenobioticSide 1 = ADP + phosphate + xenobioticSide 2.. It catalyses the reaction urate(in) + ATP + H2O = urate(out) + ADP + phosphate + H(+). The enzyme catalyses indoxyl sulfate(in) + ATP + H2O = indoxyl sulfate(out) + ADP + phosphate + H(+). It carries out the reaction sphing-4-enine 1-phosphate(in) + ATP + H2O = sphing-4-enine 1-phosphate(out) + ADP + phosphate + H(+). The catalysed reaction is estrone 3-sulfate(in) + ATP + H2O = estrone 3-sulfate(out) + ADP + phosphate + H(+). It catalyses the reaction dehydroepiandrosterone 3-sulfate(in) + ATP + H2O = dehydroepiandrosterone 3-sulfate(out) + ADP + phosphate + H(+). The enzyme catalyses 4-methylumbelliferone sulfate(in) + ATP + H2O = 4-methylumbelliferone sulfate(out) + ADP + phosphate + H(+). It carries out the reaction 5,7-dimethyl-2-methylamino-4-(3-pyridylmethyl)-1,3-benzothiazol-6-yl beta-D-glucuronate(in) + ATP + H2O = 5,7-dimethyl-2-methylamino-4-(3-pyridylmethyl)-1,3-benzothiazol-6-yl beta-D-glucuronate(out) + ADP + phosphate + H(+). The catalysed reaction is 4-methylumbelliferone beta-D-glucuronate(in) + ATP + H2O = 4-methylumbelliferone beta-D-glucuronate(out) + ADP + phosphate + H(+). It catalyses the reaction 5,7-dimethyl-2-methylamino-4-(3-pyridylmethyl)-1,3-benzothiazol-6-yl sulfate(in) + ATP + H2O = 5,7-dimethyl-2-methylamino-4-(3-pyridylmethyl)-1,3-benzothiazol-6-yl sulfate(out) + ADP + phosphate + H(+). The enzyme catalyses 17beta-estradiol 17-O-(beta-D-glucuronate)(in) + ATP + H2O = 17beta-estradiol 17-O-(beta-D-glucuronate)(out) + ADP + phosphate + H(+). It carries out the reaction methotrexate(in) + ATP + H2O = methotrexate(out) + ADP + phosphate + H(+). The catalysed reaction is riboflavin(in) + ATP + H2O = riboflavin(out) + ADP + phosphate + H(+). It catalyses the reaction pheophorbide a(in) + ATP + H2O = pheophorbide a(out) + ADP + phosphate + H(+). The enzyme catalyses itaconate(in) + ATP + H2O = itaconate(out) + ADP + phosphate + H(+). Broad substrate specificity ATP-dependent transporter of the ATP-binding cassette (ABC) family that actively extrudes a wide variety of physiological compounds, dietary toxins and xenobiotics from cells. Involved in porphyrin homeostasis, mediating the export of protoporphyrin IX (PPIX) from both mitochondria to cytosol and cytosol to extracellular space, it also functions in the cellular export of heme. Also mediates the efflux of sphingosine-1-P from cells. Acts as a urate exporter functioning in both renal and extrarenal urate excretion. In kidney, it also functions as a physiological exporter of the uremic toxin indoxyl sulfate. Also involved in the excretion of steroids like estrone 3-sulfate/E1S, 3beta-sulfooxy-androst-5-en-17-one/DHEAS, and other sulfate conjugates. Mediates the secretion of the riboflavin and biotin vitamins into milk. Extrudes pheophorbide a, a phototoxic porphyrin catabolite of chlorophyll, reducing its bioavailability. Plays an important role in the exclusion of xenobiotics from the brain. It confers to cells a resistance to multiple drugs and other xenobiotics including mitoxantrone, pheophorbide, camptothecin, methotrexate, azidothymidine, and the anthracyclines daunorubicin and doxorubicin, through the control of their efflux. In placenta, it limits the penetration of drugs from the maternal plasma into the fetus. May play a role in early stem cell self-renewal by blocking differentiation. In inflammatory macrophages, exports itaconate from the cytosol to the extracellular compartment and limits the activation of TFEB-dependent lysosome biogenesis involved in antibacterial innate immune response. The chain is Broad substrate specificity ATP-binding cassette transporter ABCG2 (ABCG2) from Bos taurus (Bovine).